We begin with the raw amino-acid sequence, 234 residues long: Octanoyltransferase (234 aa).

One can recognise a BPL/LPL catalytic domain in the interval 42 to 226 (PDTPDEFWVV…ELASLIGYET (185 aa)). Substrate contacts are provided by residues 81–88 (RGGQVTYH), 157–159 (SLG), and 170–172 (GLA). Catalysis depends on Cys-188, which acts as the Acyl-thioester intermediate.

Belongs to the LipB family.

Its subcellular location is the cytoplasm. It catalyses the reaction octanoyl-[ACP] + L-lysyl-[protein] = N(6)-octanoyl-L-lysyl-[protein] + holo-[ACP] + H(+). It functions in the pathway protein modification; protein lipoylation via endogenous pathway; protein N(6)-(lipoyl)lysine from octanoyl-[acyl-carrier-protein]: step 1/2. Its function is as follows. Catalyzes the transfer of endogenously produced octanoic acid from octanoyl-acyl-carrier-protein onto the lipoyl domains of lipoate-dependent enzymes. Lipoyl-ACP can also act as a substrate although octanoyl-ACP is likely to be the physiological substrate. The polypeptide is Octanoyltransferase (Aeromonas hydrophila subsp. hydrophila (strain ATCC 7966 / DSM 30187 / BCRC 13018 / CCUG 14551 / JCM 1027 / KCTC 2358 / NCIMB 9240 / NCTC 8049)).